The sequence spans 302 residues: MASKAHPVATTAAADWRDFLALTKPRVLTLVVFTGWCGLLAAPQSIHPVLGFTAVLCIALGAGAAGALNQWYEADLDAMMARTANRPLPAGRMDRQSALHFGVGLGIFSVLLMGLALNVLAAAILAVSILFYVVVYTIWLKRRTPQNIVIGGAAGAFPALIGWAAATGRVETLPVLLFALVFLWTPPHFWALALFINSDYARAGVPMLPAVAGQRATRIQIMLYTVPMVIAAVAPWAMGLTGAIYGIGASLLSALFLLLAAQVGFSREADPARMKAERRLFGFSILYLFLIFGLVVADKVLA.

9 consecutive transmembrane segments (helical) span residues 27 to 47 (VLTLVVFTGWCGLLAAPQSIH), 48 to 68 (PVLGFTAVLCIALGAGAAGAL), 97 to 117 (SALHFGVGLGIFSVLLMGLAL), 119 to 139 (VLAAAILAVSILFYVVVYTIW), 148 to 168 (IVIGGAAGAFPALIGWAAATG), 176 to 196 (LLFALVFLWTPPHFWALALFI), 219 to 239 (IQIMLYTVPMVIAAVAPWAMG), 240 to 260 (LTGAIYGIGASLLSALFLLLA), and 280 to 300 (LFGFSILYLFLIFGLVVADKV).

Belongs to the UbiA prenyltransferase family. Protoheme IX farnesyltransferase subfamily.

The protein resides in the cell inner membrane. The enzyme catalyses heme b + (2E,6E)-farnesyl diphosphate + H2O = Fe(II)-heme o + diphosphate. It participates in porphyrin-containing compound metabolism; heme O biosynthesis; heme O from protoheme: step 1/1. Functionally, converts heme B (protoheme IX) to heme O by substitution of the vinyl group on carbon 2 of heme B porphyrin ring with a hydroxyethyl farnesyl side group. This chain is Protoheme IX farnesyltransferase, found in Rhizorhabdus wittichii (strain DSM 6014 / CCUG 31198 / JCM 15750 / NBRC 105917 / EY 4224 / RW1) (Sphingomonas wittichii).